We begin with the raw amino-acid sequence, 256 residues long: uncharacterized protein (256 aa).

The N-terminal stretch at 1 to 22 is a signal peptide; that stretch reads MKSIKRIGLCISLLILSIFVTS. A lipid anchor (N-palmitoyl cysteine) is attached at cysteine 23. Cysteine 23 carries the S-diacylglycerol cysteine lipid modification.

The protein belongs to the staphylococcal tandem lipoprotein family.

It localises to the cell membrane. This is an uncharacterized protein from Staphylococcus aureus (strain USA300).